The primary structure comprises 423 residues: Serine hydroxymethyltransferase (423 aa).

Residues leucine 125 and 129-131 contribute to the (6S)-5,6,7,8-tetrahydrofolate site; that span reads GHL. Lysine 234 bears the N6-(pyridoxal phosphate)lysine mark. Glutamate 249 provides a ligand contact to (6S)-5,6,7,8-tetrahydrofolate.

It belongs to the SHMT family. As to quaternary structure, homodimer. Pyridoxal 5'-phosphate is required as a cofactor.

The protein resides in the cytoplasm. The enzyme catalyses (6R)-5,10-methylene-5,6,7,8-tetrahydrofolate + glycine + H2O = (6S)-5,6,7,8-tetrahydrofolate + L-serine. It participates in one-carbon metabolism; tetrahydrofolate interconversion. Its pathway is amino-acid biosynthesis; glycine biosynthesis; glycine from L-serine: step 1/1. Functionally, catalyzes the reversible interconversion of serine and glycine with tetrahydrofolate (THF) serving as the one-carbon carrier. This reaction serves as the major source of one-carbon groups required for the biosynthesis of purines, thymidylate, methionine, and other important biomolecules. Also exhibits THF-independent aldolase activity toward beta-hydroxyamino acids, producing glycine and aldehydes, via a retro-aldol mechanism. The chain is Serine hydroxymethyltransferase from Thermobifida fusca (strain YX).